A 146-amino-acid polypeptide reads, in one-letter code: Ribonuclease H (146 aa).

The region spanning 1 to 143 is the RNase H type-1 domain; that stretch reads MEKTITIYTD…CDELARLAIK (143 aa). Residues D10, E48, D70, and D135 each contribute to the Mg(2+) site.

It belongs to the RNase H family. In terms of assembly, monomer. Mg(2+) serves as cofactor.

Its subcellular location is the cytoplasm. The enzyme catalyses Endonucleolytic cleavage to 5'-phosphomonoester.. Functionally, endonuclease that specifically degrades the RNA of RNA-DNA hybrids. This is Ribonuclease H from Chlorobaculum parvum (strain DSM 263 / NCIMB 8327) (Chlorobium vibrioforme subsp. thiosulfatophilum).